We begin with the raw amino-acid sequence, 406 residues long: Bifunctional protein GlmU (406 aa).

Residues 1–221 form a pyrophosphorylase region; the sequence is MFIILAAGHG…EEEATGINSR (221 aa). UDP-N-acetyl-alpha-D-glucosamine-binding positions include 5–8, K19, Q68, 73–74, 98–100, G134, E148, N162, and N219; these read LAAG, GT, and YGD. Residue D100 coordinates Mg(2+). A Mg(2+)-binding site is contributed by N219. The segment at 222–242 is linker; it reads NDLAKAEFYFQENRRKFFTDS. Residues 243–406 are N-acetyltransferase; sequence GVTLVAPETV…RRKQMVKKIK (164 aa). K308 contributes to the UDP-N-acetyl-alpha-D-glucosamine binding site. The active-site Proton acceptor is the H320. Y323 and N334 together coordinate UDP-N-acetyl-alpha-D-glucosamine. Residues A337, 343–344, A380, and R397 each bind acetyl-CoA; that span reads NY.

It in the N-terminal section; belongs to the N-acetylglucosamine-1-phosphate uridyltransferase family. The protein in the C-terminal section; belongs to the transferase hexapeptide repeat family. In terms of assembly, homotrimer. Mg(2+) serves as cofactor.

The protein resides in the cytoplasm. It catalyses the reaction alpha-D-glucosamine 1-phosphate + acetyl-CoA = N-acetyl-alpha-D-glucosamine 1-phosphate + CoA + H(+). The enzyme catalyses N-acetyl-alpha-D-glucosamine 1-phosphate + UTP + H(+) = UDP-N-acetyl-alpha-D-glucosamine + diphosphate. The protein operates within nucleotide-sugar biosynthesis; UDP-N-acetyl-alpha-D-glucosamine biosynthesis; N-acetyl-alpha-D-glucosamine 1-phosphate from alpha-D-glucosamine 6-phosphate (route II): step 2/2. It functions in the pathway nucleotide-sugar biosynthesis; UDP-N-acetyl-alpha-D-glucosamine biosynthesis; UDP-N-acetyl-alpha-D-glucosamine from N-acetyl-alpha-D-glucosamine 1-phosphate: step 1/1. It participates in bacterial outer membrane biogenesis; LPS lipid A biosynthesis. Its function is as follows. Catalyzes the last two sequential reactions in the de novo biosynthetic pathway for UDP-N-acetylglucosamine (UDP-GlcNAc). The C-terminal domain catalyzes the transfer of acetyl group from acetyl coenzyme A to glucosamine-1-phosphate (GlcN-1-P) to produce N-acetylglucosamine-1-phosphate (GlcNAc-1-P), which is converted into UDP-GlcNAc by the transfer of uridine 5-monophosphate (from uridine 5-triphosphate), a reaction catalyzed by the N-terminal domain. The polypeptide is Bifunctional protein GlmU (Wolbachia sp. subsp. Brugia malayi (strain TRS)).